The following is an 86-amino-acid chain: Progonadoliberin IIB (86 aa).

Residues 1–24 form the signal peptide; sequence MVHICRLFVVMGMLMFLSVQFASS. Gln-25 is modified (pyrrolidone carboxylic acid). Glycine amide is present on Gly-34.

The protein belongs to the GnRH family. In terms of tissue distribution, olfactory bulbs, hypothalamus and telencephalon, midbrain and posterior brain areas.

It localises to the secreted. Stimulates the secretion of gonadotropins. In Carassius auratus (Goldfish), this protein is Progonadoliberin IIB (gnrh2b).